Reading from the N-terminus, the 413-residue chain is Sporulation-specific protein 74 (413 aa).

Positions 1–87 (MGAGTLLNGL…SEHTDDFNDG (87 aa)) are disordered. The span at 69–83 (HENKDIHERSEHTDD) shows a compositional bias: basic and acidic residues.

Interacts with itself. Interacts with MPC54, NUD1 and SPO21/MPC70.

The protein resides in the cytoplasm. Its subcellular location is the cytoskeleton. It localises to the microtubule organizing center. It is found in the spindle pole body. Functionally, involved in the pathway that organizes the shaping and sizing of the prospore membrane (PSM) during sporulation. Probable component of a core structural unit of the scaffold that initiates synthesis of the prospore membrane. The sequence is that of Sporulation-specific protein 74 (SPO74) from Saccharomyces cerevisiae (strain ATCC 204508 / S288c) (Baker's yeast).